Here is a 111-residue protein sequence, read N- to C-terminus: uncharacterized protein (111 aa).

A coiled-coil region spans residues 4–51; it reads LGQVKVLEEKVAKAVHLVQMLKEENAALRAEIDGRGKRITELEQLVLX.

This is an uncharacterized protein from Treponema pallidum (strain Nichols).